The sequence spans 361 residues: MAGNTIGQLFRVTTFGESHGLALGCIVDGVPPGIPLTEADLQHDLDRRRPGTSRYTTQRREPDQVKILSGVFDGVTTGTSIGLLIENTDQRSQDYSAIKDVFRPGHADYTYEQKYGLRDYRGGGRSSARETAMRVAAGAIAKKYLAEKFGIEIRGCLTQMGDIPLEIKDWRQVELNPFFCPDADKLDALDELMRALKKEGDSIGAKVTVMASGVPAGLGEPVFDRLDADIAHALMSINAVKGVEIGEGFNVVALRGSQNRDEITAQGFQSNHAGGILGGISSGQHIVAHMALKPTSSITVPGRTINRMGEEVEMITKGRHDPCVGIRAVPIAEAMLAIVLMDHLLRHRAQNADVKTEIPRW.

Arg48 and Arg54 together coordinate NADP(+). FMN contacts are provided by residues 125–127 (RSS), 238–239 (NA), Gly278, 293–297 (KPTSS), and Arg319.

It belongs to the chorismate synthase family. As to quaternary structure, homotetramer. It depends on FMNH2 as a cofactor.

The enzyme catalyses 5-O-(1-carboxyvinyl)-3-phosphoshikimate = chorismate + phosphate. The protein operates within metabolic intermediate biosynthesis; chorismate biosynthesis; chorismate from D-erythrose 4-phosphate and phosphoenolpyruvate: step 7/7. In terms of biological role, catalyzes the anti-1,4-elimination of the C-3 phosphate and the C-6 proR hydrogen from 5-enolpyruvylshikimate-3-phosphate (EPSP) to yield chorismate, which is the branch point compound that serves as the starting substrate for the three terminal pathways of aromatic amino acid biosynthesis. This reaction introduces a second double bond into the aromatic ring system. The polypeptide is Chorismate synthase (Salmonella dublin (strain CT_02021853)).